Reading from the N-terminus, the 184-residue chain is MLPKISLAAVGLTVGGILTITGFVAYALDYATLNLAGFFYGIPLVLGGLALKAAELKPIPFSQPTSEKIIALRNQLATPTQNQIRKDVTRYRYGQEAHLDESLERLGLSPTDEERPVLTSLLEQDWEGKYVLTLTFTSPFISLETWQEKQEKIAKFFGPDLEVTVAEPEEKVVTVNLISQLALP.

Helical transmembrane passes span 5 to 25 (ISLAAVGLTVGGILTITGFVA) and 31 to 51 (ATLNLAGFFYGIPLVLGGLAL).

It is found in the cellular thylakoid membrane. The chain is Thylakoid membrane protein slr0575 from Synechocystis sp. (strain ATCC 27184 / PCC 6803 / Kazusa).